Reading from the N-terminus, the 179-residue chain is Alkyl hydroperoxide reductase AhpD (179 aa).

C130 acts as the Proton donor in catalysis. A disulfide bridge links C130 with C133. The active-site Cysteine sulfenic acid (-SOH) intermediate is the C133.

The protein belongs to the AhpD family. Homotrimer.

The catalysed reaction is N(6)-[(R)-dihydrolipoyl]-L-lysyl-[lipoyl-carrier protein] + a hydroperoxide = N(6)-[(R)-lipoyl]-L-lysyl-[lipoyl-carrier protein] + an alcohol + H2O. Functionally, antioxidant protein with alkyl hydroperoxidase activity. Required for the reduction of the AhpC active site cysteine residues and for the regeneration of the AhpC enzyme activity. The polypeptide is Alkyl hydroperoxide reductase AhpD (Rhodococcus erythropolis (strain PR4 / NBRC 100887)).